Reading from the N-terminus, the 651-residue chain is ATP synthase F(1) complex catalytic subunit beta, mitochondrial (651 aa).

Residues 1–30 (MFVARRLSKNITQISKTAVKTSVRAVPVRG) constitute a mitochondrion transit peptide. ADP-binding residues include glycine 259, valine 260, glycine 261, lysine 262, threonine 263, and valine 264. Glycine 259 provides a ligand contact to ATP. Phosphate is bound by residues glycine 259, valine 260, glycine 261, lysine 262, and threonine 263. Glycine 261, lysine 262, threonine 263, and valine 264 together coordinate ATP. Threonine 263 is a binding site for Mg(2+). Glutamate 288 provides a ligand contact to Mg(2+). Arginine 289 is an ATP binding site.

This sequence belongs to the ATPase alpha/beta chains family. As to quaternary structure, homotrimer. Component of the ATP synthase complex composed at least of ATP5F1A/subunit alpha, ATP5F1B/subunit beta, ATP5MC1/subunit c (homooctomer), MT-ATP6/subunit a, MT-ATP8/subunit 8, ATP5ME/subunit e, ATP5MF/subunit f, ATP5MG/subunit g, ATP5MK/subunit k, ATP5MJ/subunit j, ATP5F1C/subunit gamma, ATP5F1D/subunit delta, ATP5F1E/subunit epsilon, ATP5PF/subunit F6, ATP5PB/subunit b, ATP5PD/subunit d, ATP5PO/subunit OSCP. ATP synthase complex consists of a soluble F(1) head domain (subunits alpha(3) and beta(3)) - the catalytic core - and a membrane F(0) domain - the membrane proton channel (subunits c, a, 8, e, f, g, k and j). These two domains are linked by a central stalk (subunits gamma, delta, and epsilon) rotating inside the F1 region and a stationary peripheral stalk (subunits F6, b, d, and OSCP).

It localises to the mitochondrion inner membrane. The enzyme catalyses ATP + H2O + 4 H(+)(in) = ADP + phosphate + 5 H(+)(out). In terms of biological role, catalytic subunit beta, of the mitochondrial membrane ATP synthase complex (F(1)F(0) ATP synthase or Complex V) that produces ATP from ADP in the presence of a proton gradient across the membrane which is generated by electron transport complexes of the respiratory chain. ATP synthase complex consist of a soluble F(1) head domain - the catalytic core - and a membrane F(1) domain - the membrane proton channel. These two domains are linked by a central stalk rotating inside the F(1) region and a stationary peripheral stalk. During catalysis, ATP synthesis in the catalytic domain of F(1) is coupled via a rotary mechanism of the central stalk subunits to proton translocation. In vivo, can only synthesize ATP although its ATP hydrolase activity can be activated artificially in vitro. With the subunit alpha (ATP5F1A), forms the catalytic core in the F(1) domain. This Dictyostelium discoideum (Social amoeba) protein is ATP synthase F(1) complex catalytic subunit beta, mitochondrial.